The following is a 355-amino-acid chain: Elongation factor Ts (355 aa).

The involved in Mg(2+) ion dislocation from EF-Tu stretch occupies residues 82 to 85 (TDFV).

It belongs to the EF-Ts family.

Its subcellular location is the cytoplasm. In terms of biological role, associates with the EF-Tu.GDP complex and induces the exchange of GDP to GTP. It remains bound to the aminoacyl-tRNA.EF-Tu.GTP complex up to the GTP hydrolysis stage on the ribosome. The protein is Elongation factor Ts of Helicobacter pylori (strain HPAG1).